The primary structure comprises 318 residues: Ribosomal RNA small subunit methyltransferase H (318 aa).

Residues 37 to 39 (GGH), aspartate 57, phenylalanine 83, aspartate 104, and glutamine 111 contribute to the S-adenosyl-L-methionine site.

The protein belongs to the methyltransferase superfamily. RsmH family.

The protein resides in the cytoplasm. The enzyme catalyses cytidine(1402) in 16S rRNA + S-adenosyl-L-methionine = N(4)-methylcytidine(1402) in 16S rRNA + S-adenosyl-L-homocysteine + H(+). In terms of biological role, specifically methylates the N4 position of cytidine in position 1402 (C1402) of 16S rRNA. This Neisseria gonorrhoeae (strain ATCC 700825 / FA 1090) protein is Ribosomal RNA small subunit methyltransferase H.